Here is a 308-residue protein sequence, read N- to C-terminus: V-type immunoglobulin domain-containing suppressor of T-cell activation (308 aa).

An N-terminal signal peptide occupies residues 1–32 (MGVPAVPEASSPRWGTLLLAIFLAASRGLVAA). In terms of domain architecture, Ig-like V-type spans 33–167 (FKVTTPYSLY…RFYGSMELQV (135 aa)). The Extracellular portion of the chain corresponds to 33–191 (FKVTTPYSLY…EQDSDSITAA (159 aa)). Asn-49, Asn-91, and Asn-127 each carry an N-linked (GlcNAc...) asparagine glycan. Cys-54 and Cys-145 are oxidised to a cystine. The helical transmembrane segment at 192-212 (ALATGACIVGILCLPLILLLV) threads the bilayer. Residues 213–308 (YKQRQVASHR…VPDSPNSEAI (96 aa)) lie on the Cytoplasmic side of the membrane. A disordered region spans residues 230–308 (MDSNTQGIEN…VPDSPNSEAI (79 aa)). A Phosphoserine modification is found at Ser-232.

In terms of processing, at the cell surface, may be cleaved by MMP14. Post-translationally, N-glycosylated. Expressed in spleen, thymus, bone marrow, lymph node, and in T-cells within the lamina propria of the small intestine. Detected on CD4+ and CD8+ T-cells, bone marrow-derived dendritic cells (BMDCs), peritoneal macrophages, neutrophils, and natural killer (NK) cells. In spleen and lymph nodes, highly expressed on CD4+ T-cell populations, and at lower levels on CD8+ T-cells. In thymus, has low expression on CD4+ cells and CD8+ cells, and not detected on CD4+CD8+ cells. Expressed in splenic and peritoneal CD11b cells. Not detected in most B cells and NK cells (at protein level). Also detected at lower levels in non-hematopoeitic tissues such as heart, brain, lung, kidney, muscle, ovary, and testis.

It localises to the cell membrane. Functionally, immunoregulatory receptor which inhibits the T-cell response. May promote differentiation of embryonic stem cells, by inhibiting BMP4 signaling. May stimulate MMP14-mediated MMP2 activation. The chain is V-type immunoglobulin domain-containing suppressor of T-cell activation from Mus musculus (Mouse).